A 384-amino-acid polypeptide reads, in one-letter code: Mannitol-1-phosphate 5-dehydrogenase (384 aa).

An NAD(+)-binding site is contributed by 3–14 (AVHFGAGNIGRG).

The protein belongs to the mannitol dehydrogenase family.

It catalyses the reaction D-mannitol 1-phosphate + NAD(+) = beta-D-fructose 6-phosphate + NADH + H(+). The sequence is that of Mannitol-1-phosphate 5-dehydrogenase from Arthrobacter sp. (strain FB24).